The following is a 538-amino-acid chain: Phosphoenolpyruvate carboxykinase (ATP) (538 aa).

Substrate-binding residues include Arg-64, Tyr-206, and Lys-212. Residues Lys-212, His-231, and 247-255 (GLSGTGKTT) each bind ATP. Mn(2+) is bound by residues Lys-212 and His-231. Asp-268 contributes to the Mn(2+) binding site. Residues Glu-296, Arg-332, 448 to 449 (RI), and Thr-454 contribute to the ATP site. Substrate is bound at residue Arg-332.

It belongs to the phosphoenolpyruvate carboxykinase (ATP) family. In terms of assembly, monomer. Mn(2+) is required as a cofactor.

It localises to the cytoplasm. It catalyses the reaction oxaloacetate + ATP = phosphoenolpyruvate + ADP + CO2. It participates in carbohydrate biosynthesis; gluconeogenesis. Involved in the gluconeogenesis. Catalyzes the conversion of oxaloacetate (OAA) to phosphoenolpyruvate (PEP) through direct phosphoryl transfer between the nucleoside triphosphate and OAA. This Enterobacter sp. (strain 638) protein is Phosphoenolpyruvate carboxykinase (ATP).